Consider the following 463-residue polypeptide: 23S rRNA (uracil(1939)-C(5))-methyltransferase RlmD (463 aa).

Residues 6–76 (KSRKPQQPEY…KRLEEAEMVA (71 aa)) enclose the TRAM domain. [4Fe-4S] cluster contacts are provided by C90, C96, C99, and C178. 6 residues coordinate S-adenosyl-L-methionine: Q288, F317, N322, E341, D368, and D389. Catalysis depends on C415, which acts as the Nucleophile.

The protein belongs to the class I-like SAM-binding methyltransferase superfamily. RNA M5U methyltransferase family. RlmD subfamily.

It carries out the reaction uridine(1939) in 23S rRNA + S-adenosyl-L-methionine = 5-methyluridine(1939) in 23S rRNA + S-adenosyl-L-homocysteine + H(+). Its function is as follows. Catalyzes the formation of 5-methyl-uridine at position 1939 (m5U1939) in 23S rRNA. The protein is 23S rRNA (uracil(1939)-C(5))-methyltransferase RlmD of Acinetobacter baumannii (strain ACICU).